The following is a 211-amino-acid chain: Uracil phosphoribosyltransferase (211 aa).

5-phospho-alpha-D-ribose 1-diphosphate is bound by residues R78, R103, and 130 to 138 (DPMLATGGT). Residues I195 and 200–202 (GDA) each bind uracil. Position 201 (D201) interacts with 5-phospho-alpha-D-ribose 1-diphosphate.

It belongs to the UPRTase family. Requires Mg(2+) as cofactor.

It carries out the reaction UMP + diphosphate = 5-phospho-alpha-D-ribose 1-diphosphate + uracil. Its pathway is pyrimidine metabolism; UMP biosynthesis via salvage pathway; UMP from uracil: step 1/1. With respect to regulation, allosterically activated by GTP. Its function is as follows. Catalyzes the conversion of uracil and 5-phospho-alpha-D-ribose 1-diphosphate (PRPP) to UMP and diphosphate. In Streptomyces avermitilis (strain ATCC 31267 / DSM 46492 / JCM 5070 / NBRC 14893 / NCIMB 12804 / NRRL 8165 / MA-4680), this protein is Uracil phosphoribosyltransferase.